Reading from the N-terminus, the 314-residue chain is MHAYLHCLSHSPLVGYVDPAQEVLDEVNGVIASARERIAAFSPELVVLFAPDHYNGFFYDVMPPFCLGVGATAIGDFGSAAGELPVPVELAEACAHAVMKSGIDLAVSYCMQVDHGFAQPLEFLLGGLYKVPVLPVFINGVATPLPGFQRTRMLGEAIGRFTSTLNKRVLFLGSGGLSHQPPVPELAKADAHMRDRLLGSGKDLPASERELRQQRVISAAEKFVEDQRTLHPLNPIWDNQFMTLLEQGRIQELDAVSNEELSAIAGKSTHEIKTWVAAFAAISTFGNWRSEGRYYRPIPEWIAGFGSLSARTEN.

The active-site Proton donor is His115. Catalysis depends on His179, which acts as the Proton acceptor.

It belongs to the LigB/MhpB extradiol dioxygenase family. In terms of assembly, homotetramer. Requires Fe(2+) as cofactor.

The enzyme catalyses 3-(2,3-dihydroxyphenyl)propanoate + O2 = (2Z,4E)-2-hydroxy-6-oxonona-2,4-dienedioate + H(+). It carries out the reaction (2E)-3-(2,3-dihydroxyphenyl)prop-2-enoate + O2 = (2Z,4E,7E)-2-hydroxy-6-oxonona-2,4,7-trienedioate + H(+). The protein operates within aromatic compound metabolism; 3-phenylpropanoate degradation. In terms of biological role, catalyzes the non-heme iron(II)-dependent oxidative cleavage of 2,3-dihydroxyphenylpropionic acid and 2,3-dihydroxicinnamic acid into 2-hydroxy-6-ketononadienedioate and 2-hydroxy-6-ketononatrienedioate, respectively. The polypeptide is 2,3-dihydroxyphenylpropionate/2,3-dihydroxicinnamic acid 1,2-dioxygenase (Escherichia coli (strain 55989 / EAEC)).